The primary structure comprises 352 residues: MTVNIRNWQELKKPSNLEIKTGGDGKRKATFVAEPLERGFGLTLGNALRRVLLSSLQGAAITSIKIENVLHEFSSLAGVREDVTDIVLNVKQIALKMEGEGPKRLQLSATGPATVKAGDIMVSGDIKVMNPNHVICHLDEGATLNMELVADTGKGYVPATANRPADAPIGLIPVDSLYSPVRQVAYKVDNARIGQELDYDKLNLTVETDGTVTPEDAVAYAARILQDQLQVFVHFEEAMSDSGLIGMAAPSAASDESDVNQLNRFLLKKVDELELSVRSANCLKNDNIIYIGDLVQKTEAEMLRTPNFGRKSLNEIKEVLSSMGLRLGMDIPGWPPENIEEMAKKLEQELLG.

The interval 1–236 is alpha N-terminal domain (alpha-NTD); the sequence is MTVNIRNWQE…DQLQVFVHFE (236 aa). The tract at residues 257–352 is alpha C-terminal domain (alpha-CTD); the sequence is SDVNQLNRFL…AKKLEQELLG (96 aa).

The protein belongs to the RNA polymerase alpha chain family. Homodimer. The RNAP catalytic core consists of 2 alpha, 1 beta, 1 beta' and 1 omega subunit. When a sigma factor is associated with the core the holoenzyme is formed, which can initiate transcription.

The enzyme catalyses RNA(n) + a ribonucleoside 5'-triphosphate = RNA(n+1) + diphosphate. In terms of biological role, DNA-dependent RNA polymerase catalyzes the transcription of DNA into RNA using the four ribonucleoside triphosphates as substrates. The chain is DNA-directed RNA polymerase subunit alpha from Sphingopyxis alaskensis (strain DSM 13593 / LMG 18877 / RB2256) (Sphingomonas alaskensis).